The following is a 414-amino-acid chain: 2,3-diketo-5-methylthiopentyl-1-phosphate enolase (414 aa).

The active-site Proton acceptor is K99. Substrate-binding positions include K148, 174 to 177, H265, G338, and 360 to 361; these read KDDE and GG. Mg(2+)-binding residues include K174, D176, and E177. K174 carries the N6-carboxylysine modification.

The protein belongs to the RuBisCO large chain family. Type IV subfamily. As to quaternary structure, homodimer. Requires Mg(2+) as cofactor.

It carries out the reaction 5-methylsulfanyl-2,3-dioxopentyl phosphate = 2-hydroxy-5-methylsulfanyl-3-oxopent-1-enyl phosphate. The protein operates within amino-acid biosynthesis; L-methionine biosynthesis via salvage pathway; L-methionine from S-methyl-5-thio-alpha-D-ribose 1-phosphate: step 3/6. In terms of biological role, catalyzes the enolization of 2,3-diketo-5-methylthiopentyl-1-phosphate (DK-MTP-1-P) into 2-hydroxy-3-keto-5-methylthiopentenyl-1-phosphate (HK-MTPenyl-1-P). The sequence is that of 2,3-diketo-5-methylthiopentyl-1-phosphate enolase from Bacillus mycoides (strain KBAB4) (Bacillus weihenstephanensis).